A 2200-amino-acid chain; its full sequence is Tyrosine-protein phosphatase Lar-like (2200 aa).

The signal sequence occupies residues 1-42; sequence MIQFRNKNNSMNRIARHLRNVARRKGSSLLLFLMLSTVLVAA. 2 N-linked (GlcNAc...) asparagine glycosylation sites follow: Asn-8 and Asn-116. Residues 43–1497 lie on the Extracellular side of the membrane; that stretch reads KEDDPARLVV…LRGASQKSSP (1455 aa). 3 Ig-like C2-type domains span residues 47-139, 151-240, and 250-334; these read PARL…ASLT, PQIE…KAAN, and PYFS…TTVI. Cystine bridges form between Cys-69-Cys-122 and Cys-172-Cys-225. 2 N-linked (GlcNAc...) asparagine glycosylation sites follow: Asn-269 and Asn-315. Cys-272 and Cys-318 form a disulfide bridge. 9 consecutive Fibronectin type-III domains span residues 341–434, 439–535, 539–628, 633–748, 752–856, 857–956, 957–1053, 1058–1158, and 1181–1287; these read PPVN…TKPS, APVS…TRQG, QPPM…TIAS, SPTI…TLED, APRN…IPPE, APEI…PVGS, PDGE…PDPA, PPTN…NYMT, and MVQN…TGPP. The N-linked (GlcNAc...) asparagine glycan is linked to Asn-574. N-linked (GlcNAc...) asparagine glycans are attached at residues Asn-945, Asn-988, Asn-1069, Asn-1141, Asn-1212, and Asn-1330. The tract at residues 1355 to 1392 is disordered; it reads LARSLSVSPSKKLKRKASEVGDDSQSASYHPKEKRARR. Residues 1498–1518 traverse the membrane as a helical segment; sequence WVGACIAFLVLFSIVGMLICW. The Cytoplasmic segment spans residues 1519–2200; sequence WLRCNKKSAG…EYLAAYDNFS (682 aa). Tyrosine-protein phosphatase domains lie at 1647 to 1902 and 1933 to 2192; these read FQSE…VLDA and IDME…AYEY. Residues Asp-1811, 1843–1849, and Gln-1887 contribute to the substrate site; that span reads CSAGIGR. The active-site Phosphocysteine intermediate is the Cys-1843. The Phosphocysteine intermediate role is filled by Cys-2133.

The protein belongs to the protein-tyrosine phosphatase family. Receptor class 2A subfamily. In terms of tissue distribution, both isoforms are ubiquitously expressed in early embryos. In later embryos, larvae and adults expression is highest in the nerve ring, dorsal cord, ventral cord and epithelial tissues.

Its subcellular location is the cell junction. The protein resides in the adherens junction. It localises to the cell membrane. It catalyses the reaction O-phospho-L-tyrosyl-[protein] + H2O = L-tyrosyl-[protein] + phosphate. Has a role in early neural and epidermal development; neuroblast movements during closure of the gastrulation cleft and epidermal morphogenesis. Vab-1 and ptp-3 may function redundantly within the same sets of neuronal precursors. The protein is Tyrosine-protein phosphatase Lar-like (ptp-3) of Caenorhabditis elegans.